Reading from the N-terminus, the 100-residue chain is Small cysteine and glycine repeat-containing protein 3 (100 aa).

Residues 4 to 82 form a 13 X 2 AA repeats of CG region; sequence CGCGSCGGCG…RRTCRSCGCG (79 aa).

This sequence belongs to the KRTAP type 28 family.

In the hair cortex, hair keratin intermediate filaments are embedded in an interfilamentous matrix, consisting of hair keratin-associated proteins (KRTAP), which are essential for the formation of a rigid and resistant hair shaft through their extensive disulfide bond cross-linking with abundant cysteine residues of hair keratins. The matrix proteins include the high-sulfur and high-glycine-tyrosine keratins. The sequence is that of Small cysteine and glycine repeat-containing protein 3 from Homo sapiens (Human).